Reading from the N-terminus, the 549-residue chain is Oxygen-dependent choline dehydrogenase (549 aa).

4-33 (DFVIIGSGSAGSALAYRLSEDGKNSVLVIE) is an FAD binding site. The active-site Proton acceptor is the His465.

The protein belongs to the GMC oxidoreductase family. Requires FAD as cofactor.

It carries out the reaction choline + A = betaine aldehyde + AH2. The enzyme catalyses betaine aldehyde + NAD(+) + H2O = glycine betaine + NADH + 2 H(+). It participates in amine and polyamine biosynthesis; betaine biosynthesis via choline pathway; betaine aldehyde from choline (cytochrome c reductase route): step 1/1. In terms of biological role, involved in the biosynthesis of the osmoprotectant glycine betaine. Catalyzes the oxidation of choline to betaine aldehyde and betaine aldehyde to glycine betaine at the same rate. The protein is Oxygen-dependent choline dehydrogenase of Rhizobium etli (strain CIAT 652).